We begin with the raw amino-acid sequence, 156 residues long: ATP synthase subunit b (156 aa).

The chain crosses the membrane as a helical span at residues 7–27 (LFAQMVVFLILAWFTMKFVWP).

It belongs to the ATPase B chain family. In terms of assembly, F-type ATPases have 2 components, F(1) - the catalytic core - and F(0) - the membrane proton channel. F(1) has five subunits: alpha(3), beta(3), gamma(1), delta(1), epsilon(1). F(0) has three main subunits: a(1), b(2) and c(10-14). The alpha and beta chains form an alternating ring which encloses part of the gamma chain. F(1) is attached to F(0) by a central stalk formed by the gamma and epsilon chains, while a peripheral stalk is formed by the delta and b chains.

It localises to the cell inner membrane. In terms of biological role, f(1)F(0) ATP synthase produces ATP from ADP in the presence of a proton or sodium gradient. F-type ATPases consist of two structural domains, F(1) containing the extramembraneous catalytic core and F(0) containing the membrane proton channel, linked together by a central stalk and a peripheral stalk. During catalysis, ATP synthesis in the catalytic domain of F(1) is coupled via a rotary mechanism of the central stalk subunits to proton translocation. Functionally, component of the F(0) channel, it forms part of the peripheral stalk, linking F(1) to F(0). In Paraburkholderia xenovorans (strain LB400), this protein is ATP synthase subunit b.